Here is a 113-residue protein sequence, read N- to C-terminus: Dolichyl-diphosphooligosaccharide--protein glycosyltransferase subunit DAD1 (113 aa).

At Ser-2 the chain carries N-acetylserine. Residues 2–30 (SASVVSVISRFLEEYLSSTPQRLKLLDAY) are Cytoplasmic-facing. The helical transmembrane segment at 31 to 51 (LLYILLTGALQFGYCLLVGTF) threads the bilayer. Pro-52 is a topological domain (lumenal). A helical transmembrane segment spans residues 53–73 (FNSFLSGFISCVGSFILAVRL). At 74–92 (RIQINPQNKADFQGISPER) the chain is on the cytoplasmic side. Residues 93 to 113 (AFADFLFASTILHLVVMNFVG) traverse the membrane as a helical segment.

This sequence belongs to the DAD/OST2 family. As to quaternary structure, component of the oligosaccharyltransferase (OST) complex. OST exists in two different complex forms which contain common core subunits RPN1, RPN2, OST48, OST4, DAD1 and TMEM258, either STT3A or STT3B as catalytic subunits, and form-specific accessory subunits. STT3A complex assembly occurs through the formation of 3 subcomplexes. Subcomplex 1 contains RPN1 and TMEM258, subcomplex 2 contains the STT3A-specific subunits STT3A, DC2/OSTC, and KCP2 as well as the core subunit OST4, and subcomplex 3 contains RPN2, DAD1, and OST48. The STT3A complex can form stable complexes with the Sec61 complex or with both the Sec61 and TRAP complexes.

It localises to the endoplasmic reticulum membrane. It functions in the pathway protein modification; protein glycosylation. In terms of biological role, subunit of the oligosaccharyl transferase (OST) complex that catalyzes the initial transfer of a defined glycan (Glc(3)Man(9)GlcNAc(2) in eukaryotes) from the lipid carrier dolichol-pyrophosphate to an asparagine residue within an Asn-X-Ser/Thr consensus motif in nascent polypeptide chains, the first step in protein N-glycosylation. N-glycosylation occurs cotranslationally and the complex associates with the Sec61 complex at the channel-forming translocon complex that mediates protein translocation across the endoplasmic reticulum (ER). All subunits are required for a maximal enzyme activity. The chain is Dolichyl-diphosphooligosaccharide--protein glycosyltransferase subunit DAD1 from Pongo abelii (Sumatran orangutan).